We begin with the raw amino-acid sequence, 114 residues long: Ribosome-binding factor A (114 aa).

The protein belongs to the RbfA family. In terms of assembly, monomer. Binds 30S ribosomal subunits, but not 50S ribosomal subunits or 70S ribosomes.

Its subcellular location is the cytoplasm. In terms of biological role, one of several proteins that assist in the late maturation steps of the functional core of the 30S ribosomal subunit. Associates with free 30S ribosomal subunits (but not with 30S subunits that are part of 70S ribosomes or polysomes). Required for efficient processing of 16S rRNA. May interact with the 5'-terminal helix region of 16S rRNA. This chain is Ribosome-binding factor A, found in Listeria monocytogenes serotype 4b (strain F2365).